A 308-amino-acid chain; its full sequence is Tyrosine recombinase XerD (308 aa).

The 87-residue stretch at 3-89 (NGFTRLTEQF…SIHEFHRFAL (87 aa)) folds into the Core-binding (CB) domain. The 192-residue stretch at 110–301 (TLPDVLTVDE…SPETLIETYL (192 aa)) folds into the Tyr recombinase domain. Active-site residues include Arg-153, Lys-177, His-253, Arg-256, and His-279. Residue Tyr-288 is the O-(3'-phospho-DNA)-tyrosine intermediate of the active site.

This sequence belongs to the 'phage' integrase family. XerD subfamily. In terms of assembly, forms a cyclic heterotetrameric complex composed of two molecules of XerC and two molecules of XerD.

It is found in the cytoplasm. Its function is as follows. Site-specific tyrosine recombinase, which acts by catalyzing the cutting and rejoining of the recombining DNA molecules. The XerC-XerD complex is essential to convert dimers of the bacterial chromosome into monomers to permit their segregation at cell division. It also contributes to the segregational stability of plasmids. The chain is Tyrosine recombinase XerD from Bifidobacterium longum (strain NCC 2705).